We begin with the raw amino-acid sequence, 196 residues long: uncharacterized protein (196 aa).

The N-terminal stretch at 1-21 is a signal peptide; that stretch reads MNGKQCFCFFLFHLFYTGLFA. A lipid anchor (N-palmitoyl cysteine) is attached at Cys22. Cys22 is lipidated: S-diacylglycerol cysteine.

It localises to the cell membrane. This is an uncharacterized protein from Treponema pallidum (strain Nichols).